The following is a 31-amino-acid chain: Cytochrome b6-f complex subunit 6 (31 aa).

Residues 4–24 form a helical membrane-spanning segment; it reads ITSYFGFLLAALTITPALFIG.

The protein belongs to the PetL family. In terms of assembly, the 4 large subunits of the cytochrome b6-f complex are cytochrome b6, subunit IV (17 kDa polypeptide, PetD), cytochrome f and the Rieske protein, while the 4 small subunits are PetG, PetL, PetM and PetN. The complex functions as a dimer.

The protein resides in the plastid. Its subcellular location is the chloroplast thylakoid membrane. In terms of biological role, component of the cytochrome b6-f complex, which mediates electron transfer between photosystem II (PSII) and photosystem I (PSI), cyclic electron flow around PSI, and state transitions. PetL is important for photoautotrophic growth as well as for electron transfer efficiency and stability of the cytochrome b6-f complex. This chain is Cytochrome b6-f complex subunit 6, found in Saccharum barberi (Indian sugarcane).